The primary structure comprises 509 residues: Ribonuclease E/G-like protein (509 aa).

An S1 motif domain is found at 35–117; that stretch reads SDIYLGCVDK…LTANITLSGR (83 aa). Residues D296 and D339 each coordinate Mg(2+).

This sequence belongs to the RNase E/G family. Mg(2+) is required as a cofactor.

The protein resides in the plastid. It is found in the chloroplast stroma. Involved in intercistronic processing of primary transcripts from chloroplast operons. The endonucleolytic activity of the enzyme depends on the number of phosphates at the 5' end, is inhibited by structured RNA, and preferentially cleaves A/U-rich sequences. This Pyropia yezoensis (Susabi-nori) protein is Ribonuclease E/G-like protein (rne).